The sequence spans 260 residues: MKSQSHKPWNLVAGIFFPIITFFLSAPLVGHALYLFCMRNDHVYYRDFQSTLPRVQTLVSVSLLALFLLSNIGMFLRPRRLSYFLVIVFFIGFAYSGVYKMESRRFSPTPMCFKGEYNNGQGERKTEQYQVVKIEQSQGRLQRVHLRFVNSYALPPYDRRLLPSVKTGCCNRPGNCKLETVNATLWVTRNREGPPLETAMIYDRYGGNADIKDYYDMWRHELSVLYYDCMTCQVRIIKSPRLRKWWQFGVFLSSLTSLFR.

Residues Met-1–Asn-10 are Cytoplasmic-facing. A helical transmembrane segment spans residues Leu-11–His-31. Residues Ala-32 to Arg-54 are Extracellular-facing. The chain crosses the membrane as a helical span at residues Val-55 to Phe-75. Over Leu-76–Arg-80 the chain is Cytoplasmic. A helical membrane pass occupies residues Leu-81–Met-101. Residues Glu-102–Arg-260 lie on the Extracellular side of the membrane. The N-linked (GlcNAc...) asparagine glycan is linked to Asn-182.

Belongs to the tetraspanin (TM4SF) family.

It is found in the membrane. In terms of biological role, may be involved in the regulation of cell differentiation. The sequence is that of Tetraspanin-14 (TET14) from Arabidopsis thaliana (Mouse-ear cress).